Consider the following 429-residue polypeptide: Enolase (429 aa).

Gln-165 is a (2R)-2-phosphoglycerate binding site. Glu-207 (proton donor) is an active-site residue. The Mg(2+) site is built by Asp-244, Glu-287, and Asp-314. Positions 339, 368, 369, and 390 each coordinate (2R)-2-phosphoglycerate. Lys-339 serves as the catalytic Proton acceptor.

It belongs to the enolase family. Mg(2+) serves as cofactor.

It is found in the cytoplasm. Its subcellular location is the secreted. The protein resides in the cell surface. The enzyme catalyses (2R)-2-phosphoglycerate = phosphoenolpyruvate + H2O. Its pathway is carbohydrate degradation; glycolysis; pyruvate from D-glyceraldehyde 3-phosphate: step 4/5. Functionally, catalyzes the reversible conversion of 2-phosphoglycerate (2-PG) into phosphoenolpyruvate (PEP). It is essential for the degradation of carbohydrates via glycolysis. The chain is Enolase from Roseiflexus sp. (strain RS-1).